A 428-amino-acid chain; its full sequence is Probable G-protein coupled receptor (428 aa).

Over 1-46 the chain is Extracellular; that stretch reads MMADKTSPMITSDHSISNFSTGLFGPHPTVPPDVGVVTSSQSQMKD. N-linked (GlcNAc...) asparagine glycosylation occurs at Asn18. The chain crosses the membrane as a helical span at residues 47 to 67; sequence LFGLFCMVTLNLIALLANTGV. Residues 68–93 are Cytoplasmic-facing; it reads MVAIARAPHLKKFAFVCHLCAVDVLC. Residues 94–114 traverse the membrane as a helical segment; it reads AILLMPLGIISSSPFFGTVVF. Topologically, residues 115–120 are extracellular; it reads TILECQ. A helical transmembrane segment spans residues 121 to 141; that stretch reads VYIFLNVFLIWLSILTITAIS. The Cytoplasmic segment spans residues 142-162; that stretch reads VERYFYIVHPMRYEVKMTINL. A helical transmembrane segment spans residues 163–183; sequence VIGVMLLIWFKSLLLALVTLF. The Extracellular segment spans residues 184 to 210; that stretch reads GWPPYGHQSSIAASHCSLHASHSRLRG. Residues 211 to 231 traverse the membrane as a helical segment; that stretch reads VFAVLFCVICFLAPVVVIFSV. Topologically, residues 232–293 are cytoplasmic; sequence YSAVYKVARS…PERAFSGGKA (62 aa). A helical transmembrane segment spans residues 294-314; that stretch reads ALTLAFIVGQFLVCWLPFFIF. Topologically, residues 315–428 are extracellular; it reads HLQMSLTGSM…IPGQIPEEQA (114 aa). Residues 398–414 are compositionally biased toward polar residues; that stretch reads SETHPSFANSNPRNMEN. The segment at 398–428 is disordered; sequence SETHPSFANSNPRNMENQAHKIPGQIPEEQA.

This sequence belongs to the G-protein coupled receptor 1 family.

The protein localises to the cell membrane. The polypeptide is Probable G-protein coupled receptor (Oryzias latipes (Japanese rice fish)).